Consider the following 462-residue polypeptide: Ketoisovalerate reductase (462 aa).

The disordered stretch occupies residues 34–55; that stretch reads PTAVKPDRADRGDFDPGKYPVD. The span at 38–49 shows a compositional bias: basic and acidic residues; the sequence is KPDRADRGDFDP. Residue 72–77 participates in NADP(+) binding; sequence GPGNVG. A Calmoduling-binding motif is present at residues 167–184; it reads ADRLRRYLGRCSSVVFAQ. Catalysis depends on Lys290, which acts as the Proton donor. Positions 294, 298, and 403 each coordinate substrate. Residue Glu415 coordinates NADP(+).

Belongs to the ketopantoate reductase family. As to quaternary structure, homodimer. Binds to calmodulin in a calcium-independent manner.

It catalyses the reaction (R)-2-hydroxy-3-methylbutanoate + NADP(+) = 3-methyl-2-oxobutanoate + NADPH + H(+). Its activity is regulated as follows. Environmental stimuli such as light and salt stress suppress activity through stimulation of calmodulin (CaM) that binds BEA2 and probably impairs its dimerization. Ketoisovalerate reductase; part of the gene cluster that mediates the biosynthesis of beauvericin (BEA), a non-ribosomal cyclic hexadepsipeptide that shows antibiotic, antifungal, insecticidal, and cancer cell antiproliferative and antihaptotactic activity. Ketoisovalerate reductase BEA2 catalyzes the NADPH-specific reduction of ketoisovaleric acid to hydroxyisovalerate, a precursor for beauvericin biosynthesis. The nonribosomal cyclodepsipeptide synthetase BEA1 then catalyzes the formation of beauvericin via condensation and cyclization of 3 dipeptidol monomers, each composed of one unit of hydroxyisovalerate and one unit of N-methyl-phenylalanine. The protein is Ketoisovalerate reductase of Beauveria bassiana (White muscardine disease fungus).